Consider the following 729-residue polypeptide: Fatty acid oxidation complex subunit alpha (729 aa).

Positions 1 to 189 (MLYKGDTLYL…KIGLVDGVVK (189 aa)) are enoyl-CoA hydratase/isomerase. D296 provides a ligand contact to substrate. Residues 311–729 (ETPKQAAVLG…ARPVGSLKTA (419 aa)) are 3-hydroxyacyl-CoA dehydrogenase. NAD(+) is bound by residues M324, D343, 400 to 402 (VVE), K407, and S429. H450 functions as the For 3-hydroxyacyl-CoA dehydrogenase activity in the catalytic mechanism. Residue N453 participates in NAD(+) binding. Substrate contacts are provided by N500 and Y660. The interval 708 to 729 (RHNEPYYPPVEPARPVGSLKTA) is disordered.

This sequence in the N-terminal section; belongs to the enoyl-CoA hydratase/isomerase family. It in the C-terminal section; belongs to the 3-hydroxyacyl-CoA dehydrogenase family. As to quaternary structure, heterotetramer of two alpha chains (FadB) and two beta chains (FadA).

The catalysed reaction is a (3S)-3-hydroxyacyl-CoA + NAD(+) = a 3-oxoacyl-CoA + NADH + H(+). The enzyme catalyses a (3S)-3-hydroxyacyl-CoA = a (2E)-enoyl-CoA + H2O. It carries out the reaction a 4-saturated-(3S)-3-hydroxyacyl-CoA = a (3E)-enoyl-CoA + H2O. It catalyses the reaction (3S)-3-hydroxybutanoyl-CoA = (3R)-3-hydroxybutanoyl-CoA. The catalysed reaction is a (3Z)-enoyl-CoA = a 4-saturated (2E)-enoyl-CoA. The enzyme catalyses a (3E)-enoyl-CoA = a 4-saturated (2E)-enoyl-CoA. It participates in lipid metabolism; fatty acid beta-oxidation. Involved in the aerobic and anaerobic degradation of long-chain fatty acids via beta-oxidation cycle. Catalyzes the formation of 3-oxoacyl-CoA from enoyl-CoA via L-3-hydroxyacyl-CoA. It can also use D-3-hydroxyacyl-CoA and cis-3-enoyl-CoA as substrate. This is Fatty acid oxidation complex subunit alpha from Salmonella gallinarum (strain 287/91 / NCTC 13346).